We begin with the raw amino-acid sequence, 93 residues long: Cell division protein CrgA (93 aa).

2 helical membrane-spanning segments follow: residues Val-31–Phe-51 and Leu-70–Met-90.

Belongs to the CrgA family.

The protein resides in the cell membrane. Functionally, involved in cell division. In Mycobacterium marinum (strain ATCC BAA-535 / M), this protein is Cell division protein CrgA.